Reading from the N-terminus, the 100-residue chain is Urease subunit gamma (100 aa).

Belongs to the urease gamma subunit family. In terms of assembly, heterotrimer of UreA (gamma), UreB (beta) and UreC (alpha) subunits. Three heterotrimers associate to form the active enzyme.

It is found in the cytoplasm. The enzyme catalyses urea + 2 H2O + H(+) = hydrogencarbonate + 2 NH4(+). It functions in the pathway nitrogen metabolism; urea degradation; CO(2) and NH(3) from urea (urease route): step 1/1. In Hahella chejuensis (strain KCTC 2396), this protein is Urease subunit gamma.